A 453-amino-acid chain; its full sequence is Charged multivesicular body protein 7 (453 aa).

Residues 1-22 (MWSPEREAEAPAGGDPAGLLPP) are disordered. The segment covering 10–22 (APAGGDPAGLLPP) has biased composition (low complexity). At S232 the chain carries Phosphoserine. A coiled-coil region spans residues 243 to 312 (QLMQSEQLLS…DTVQGILDRI (70 aa)). Positions 392 to 403 (TKEPLDLPDNPR) are enriched in basic and acidic residues. Disordered stretches follow at residues 392–417 (TKEP…PRIS) and 431–453 (SEGG…LKPL). T408 carries the post-translational modification Phosphothreonine. S410, S417, S431, and S441 each carry phosphoserine.

Belongs to the SNF7 family. In terms of assembly, interacts with CHMP4B, but not with VPS25. Interacts with LEMD2 (via C-terminus).

It is found in the cytoplasm. The protein localises to the nucleus envelope. Its function is as follows. ESCRT-III-like protein required to recruit the ESCRT-III complex to the nuclear envelope (NE) during late anaphase. Together with SPAST, the ESCRT-III complex promotes NE sealing and mitotic spindle disassembly during late anaphase. Recruited to the reforming NE during anaphase by LEMD2. Plays a role in the endosomal sorting pathway. This is Charged multivesicular body protein 7 (CHMP7) from Homo sapiens (Human).